We begin with the raw amino-acid sequence, 315 residues long: Acetyl-coenzyme A carboxylase carboxyl transferase subunit alpha (315 aa).

Positions 40–293 constitute a CoA carboxyltransferase C-terminal domain; that stretch reads LQDKSKTLTE…REELSSQLAM (254 aa).

This sequence belongs to the AccA family. As to quaternary structure, acetyl-CoA carboxylase is a heterohexamer composed of biotin carboxyl carrier protein (AccB), biotin carboxylase (AccC) and two subunits each of ACCase subunit alpha (AccA) and ACCase subunit beta (AccD).

The protein resides in the cytoplasm. The catalysed reaction is N(6)-carboxybiotinyl-L-lysyl-[protein] + acetyl-CoA = N(6)-biotinyl-L-lysyl-[protein] + malonyl-CoA. Its pathway is lipid metabolism; malonyl-CoA biosynthesis; malonyl-CoA from acetyl-CoA: step 1/1. In terms of biological role, component of the acetyl coenzyme A carboxylase (ACC) complex. First, biotin carboxylase catalyzes the carboxylation of biotin on its carrier protein (BCCP) and then the CO(2) group is transferred by the carboxyltransferase to acetyl-CoA to form malonyl-CoA. The sequence is that of Acetyl-coenzyme A carboxylase carboxyl transferase subunit alpha from Pseudomonas syringae pv. syringae (strain B728a).